The primary structure comprises 188 residues: ATP synthase subunit delta (188 aa).

Belongs to the ATPase delta chain family. F-type ATPases have 2 components, F(1) - the catalytic core - and F(0) - the membrane proton channel. F(1) has five subunits: alpha(3), beta(3), gamma(1), delta(1), epsilon(1). F(0) has three main subunits: a(1), b(2) and c(10-14). The alpha and beta chains form an alternating ring which encloses part of the gamma chain. F(1) is attached to F(0) by a central stalk formed by the gamma and epsilon chains, while a peripheral stalk is formed by the delta and b chains.

The protein resides in the cell inner membrane. Its function is as follows. F(1)F(0) ATP synthase produces ATP from ADP in the presence of a proton or sodium gradient. F-type ATPases consist of two structural domains, F(1) containing the extramembraneous catalytic core and F(0) containing the membrane proton channel, linked together by a central stalk and a peripheral stalk. During catalysis, ATP synthesis in the catalytic domain of F(1) is coupled via a rotary mechanism of the central stalk subunits to proton translocation. In terms of biological role, this protein is part of the stalk that links CF(0) to CF(1). It either transmits conformational changes from CF(0) to CF(1) or is implicated in proton conduction. The chain is ATP synthase subunit delta from Agrobacterium fabrum (strain C58 / ATCC 33970) (Agrobacterium tumefaciens (strain C58)).